Consider the following 187-residue polypeptide: Threonylcarbamoyl-AMP synthase (187 aa).

The 185-residue stretch at 3-187 folds into the YrdC-like domain; sequence QVTPSQISGI…IQTGHIFRQG (185 aa).

It belongs to the SUA5 family. TsaC subfamily.

It localises to the cytoplasm. The enzyme catalyses L-threonine + hydrogencarbonate + ATP = L-threonylcarbamoyladenylate + diphosphate + H2O. Functionally, required for the formation of a threonylcarbamoyl group on adenosine at position 37 (t(6)A37) in tRNAs that read codons beginning with adenine. Catalyzes the conversion of L-threonine, HCO(3)(-)/CO(2) and ATP to give threonylcarbamoyl-AMP (TC-AMP) as the acyladenylate intermediate, with the release of diphosphate. The chain is Threonylcarbamoyl-AMP synthase from Shewanella amazonensis (strain ATCC BAA-1098 / SB2B).